Reading from the N-terminus, the 596-residue chain is Arginine--tRNA ligase (596 aa).

The 'HIGH' region signature appears at 123-133 (PNTNKPLHLGH).

It belongs to the class-I aminoacyl-tRNA synthetase family. In terms of assembly, monomer.

It localises to the cytoplasm. The enzyme catalyses tRNA(Arg) + L-arginine + ATP = L-arginyl-tRNA(Arg) + AMP + diphosphate. This Amoebophilus asiaticus (strain 5a2) protein is Arginine--tRNA ligase.